We begin with the raw amino-acid sequence, 290 residues long: Diaminopimelate epimerase (290 aa).

The substrate site is built by Asn17, Gln49, and Asn69. The active-site Proton donor is Cys78. Substrate-binding positions include 79–80 (GN), Asn166, Asn199, and 217–218 (ER). Cys226 serves as the catalytic Proton acceptor. A substrate-binding site is contributed by 227 to 228 (GS).

Belongs to the diaminopimelate epimerase family. Homodimer.

It localises to the cytoplasm. The catalysed reaction is (2S,6S)-2,6-diaminopimelate = meso-2,6-diaminopimelate. Its pathway is amino-acid biosynthesis; L-lysine biosynthesis via DAP pathway; DL-2,6-diaminopimelate from LL-2,6-diaminopimelate: step 1/1. In terms of biological role, catalyzes the stereoinversion of LL-2,6-diaminopimelate (L,L-DAP) to meso-diaminopimelate (meso-DAP), a precursor of L-lysine and an essential component of the bacterial peptidoglycan. This chain is Diaminopimelate epimerase, found in Nitrobacter hamburgensis (strain DSM 10229 / NCIMB 13809 / X14).